A 402-amino-acid polypeptide reads, in one-letter code: 2-pyrone synthase (402 aa).

The acetoacetyl-CoA site is built by K60, R63, C169, L272, R274, G310, R312, and A313. Residue C169 is part of the active site.

This sequence belongs to the thiolase-like superfamily. Chalcone/stilbene synthases family. In terms of tissue distribution, expressed in both vegetative and reproductive organs. The expression is strong in the leaf, scape (the inflorescence stem) and corolla (both in the ligule and the unpigmented tube), moderate in the bract and carpel, detectable in the root and pappus but not detectable in the stamen.

It catalyses the reaction 2 malonyl-CoA + acetyl-CoA + 2 H(+) = triacetate lactone + 2 CO2 + 3 CoA. Its function is as follows. Polyketide synthase, which uses acetyl-CoA and two condensation reactions with malonyl-CoA to form triacetic acid lactone (also called methylpyrone), a precursor of phytoalexin. May participate in insect and pathogen resistance. This chain is 2-pyrone synthase, found in Gerbera hybrida (Daisy).